A 200-amino-acid chain; its full sequence is Small ribosomal subunit protein uS4 (200 aa).

The tract at residues 22–43 (TGKELERRPYAPGQHGPTQRKK) is disordered. In terms of domain architecture, S4 RNA-binding spans 92–170 (QRLDNIVYRL…VPEYVTFDAE (79 aa)).

This sequence belongs to the universal ribosomal protein uS4 family. Part of the 30S ribosomal subunit. Contacts protein S5. The interaction surface between S4 and S5 is involved in control of translational fidelity.

In terms of biological role, one of the primary rRNA binding proteins, it binds directly to 16S rRNA where it nucleates assembly of the body of the 30S subunit. With S5 and S12 plays an important role in translational accuracy. This chain is Small ribosomal subunit protein uS4, found in Listeria monocytogenes serovar 1/2a (strain ATCC BAA-679 / EGD-e).